The primary structure comprises 357 residues: 3-dehydroquinate synthase (357 aa).

NAD(+)-binding positions include 104–108, 128–129, Lys-141, and 168–171; these read GVVGD, TT, and FLET. Residues Glu-183, His-243, and His-260 each coordinate Zn(2+).

Belongs to the sugar phosphate cyclases superfamily. Dehydroquinate synthase family. It depends on NAD(+) as a cofactor. Co(2+) serves as cofactor. Requires Zn(2+) as cofactor.

It is found in the cytoplasm. The enzyme catalyses 7-phospho-2-dehydro-3-deoxy-D-arabino-heptonate = 3-dehydroquinate + phosphate. Its pathway is metabolic intermediate biosynthesis; chorismate biosynthesis; chorismate from D-erythrose 4-phosphate and phosphoenolpyruvate: step 2/7. Functionally, catalyzes the conversion of 3-deoxy-D-arabino-heptulosonate 7-phosphate (DAHP) to dehydroquinate (DHQ). This Streptococcus pyogenes serotype M6 (strain ATCC BAA-946 / MGAS10394) protein is 3-dehydroquinate synthase.